A 327-amino-acid chain; its full sequence is Biotin synthase (327 aa).

The Radical SAM core domain maps to 49–273; it reads FNKDKIDLCS…ICIARIALPD (225 aa). [4Fe-4S] cluster-binding residues include cysteine 67, cysteine 71, and cysteine 74. [2Fe-2S] cluster-binding residues include serine 110, cysteine 142, cysteine 201, and arginine 277.

This sequence belongs to the radical SAM superfamily. Biotin synthase family. As to quaternary structure, homodimer. [4Fe-4S] cluster serves as cofactor. It depends on [2Fe-2S] cluster as a cofactor.

The enzyme catalyses (4R,5S)-dethiobiotin + (sulfur carrier)-SH + 2 reduced [2Fe-2S]-[ferredoxin] + 2 S-adenosyl-L-methionine = (sulfur carrier)-H + biotin + 2 5'-deoxyadenosine + 2 L-methionine + 2 oxidized [2Fe-2S]-[ferredoxin]. The protein operates within cofactor biosynthesis; biotin biosynthesis; biotin from 7,8-diaminononanoate: step 2/2. In terms of biological role, catalyzes the conversion of dethiobiotin (DTB) to biotin by the insertion of a sulfur atom into dethiobiotin via a radical-based mechanism. The protein is Biotin synthase of Methanococcus maripaludis (strain C6 / ATCC BAA-1332).